The primary structure comprises 212 residues: Adenylate kinase (212 aa).

10–15 (GAGKGT) contacts ATP. The tract at residues 30–59 (STGDMFRAAMANQTEMGTLAKSFIDKGELV) is NMP. AMP-binding positions include Thr-31, Arg-36, 57–59 (ELV), 86–89 (GYPR), and Gln-93. The interval 127 to 159 (GRIINRKTGETYHKVFNPPADYNEDDYYQREDD) is LID. Residues Arg-128 and 137–138 (TY) each bind ATP. Positions 156 and 167 each coordinate AMP. Position 195 (Gln-195) interacts with ATP.

This sequence belongs to the adenylate kinase family. As to quaternary structure, monomer.

It is found in the cytoplasm. It carries out the reaction AMP + ATP = 2 ADP. The protein operates within purine metabolism; AMP biosynthesis via salvage pathway; AMP from ADP: step 1/1. Functionally, catalyzes the reversible transfer of the terminal phosphate group between ATP and AMP. Plays an important role in cellular energy homeostasis and in adenine nucleotide metabolism. The chain is Adenylate kinase from Streptococcus mutans serotype c (strain ATCC 700610 / UA159).